A 384-amino-acid chain; its full sequence is Sialyltransferase-like protein 3 (384 aa).

Residues 1–5 are Cytoplasmic-facing; the sequence is MKRRH. The chain crosses the membrane as a helical; Signal-anchor for type II membrane protein span at residues 6 to 26; the sequence is WSHPSCGLLLLVAVFCLLLVF. At 27–384 the chain is on the lumenal side; it reads RCSQLRHSGD…FRLPPVSFYR (358 aa). Asparagine 241 is a glycosylation site (N-linked (GlcNAc...) asparagine).

Belongs to the glycosyltransferase 29 family.

The protein resides in the golgi apparatus membrane. Its function is as follows. Possesses sialyltransferase-like activity in vitro. Transfers sialic acid to the glycoprotein asialofetuin. The transferred sialic acid is linked to galactose of Gal-beta-1,3-GalNAc through alpha-2,6-linkage. The sequence is that of Sialyltransferase-like protein 3 from Oryza sativa subsp. indica (Rice).